The sequence spans 317 residues: Zinc finger protein CRM3 (317 aa).

Positions 1–15 (MNFSLSKQSSEKQSS) are enriched in low complexity. The segment at 1-22 (MNFSLSKQSSEKQSSYTDKSRS) is disordered. C2H2-type zinc fingers lie at residues 254–276 (KQCPVCGKICSRPSTLKTHYLIH) and 282–306 (FKCTWEGCTKSFNVKSNMLRHLKSH).

It is found in the nucleus. Its function is as follows. Probable transcription factor involved in the regulation of the transcription of genes involved in cell rescue and defense, as well as cell cycle and DNA processing. This chain is Zinc finger protein CRM3, found in Saccharomyces cerevisiae (strain ATCC 204508 / S288c) (Baker's yeast).